The following is a 547-amino-acid chain: Putative cysteine ligase BshC (547 aa).

Positions 462-484 (NLAEENLDRVIAQARFLRQKVEH) form a coiled coil.

It belongs to the BshC family.

Functionally, involved in bacillithiol (BSH) biosynthesis. May catalyze the last step of the pathway, the addition of cysteine to glucosamine malate (GlcN-Mal) to generate BSH. The sequence is that of Putative cysteine ligase BshC from Heliobacterium modesticaldum (strain ATCC 51547 / Ice1).